A 458-amino-acid chain; its full sequence is Protein RICE SALT SENSITIVE 3 (458 aa).

Gly residues predominate over residues 1-17; that stretch reads MVGSGAAGGGGGGGGGG. 4 disordered regions span residues 1 to 21, 220 to 325, 354 to 374, and 386 to 458; these read MVGS…DHAR, TSPS…PEGD, GGGA…GHGG, and SHSN…TFLE. The segment covering 220 to 232 has biased composition (low complexity); sequence TSPSPSSFPLKQQ. Residues 245-262 are compositionally biased toward pro residues; it reads HAPPQLPPGASPLFPPGP. Over residues 308–317 the composition is skewed to low complexity; that stretch reads QQPMAAPQQH. Residues 413–436 show a composition bias toward low complexity; it reads SSSTTSTSPSVSASTAPAPPQQQQ.

In terms of assembly, interacts with BHLH094, BHLH089, TIFY11A/JAZ9 and TIFY11C/JAZ11. Forms a ternary complex with TIFY11A/JAZ9 and BHLH094 in the nucleus. As to expression, expressed in root tips. Expressed at high levels in the meristematic zone and at low levels in the elongation zone of the root tip.

The protein resides in the nucleus. Its subcellular location is the cytoplasm. In terms of biological role, involved in the repression of jasmonate (JA)-induced genes. Forms a ternary complex with TIFY11A/JAZ9 and BHLH094 to negatively regulate JA-responsive genes. Involved in transcriptional regulation in the root tip. Plays a regulatory role in root cell elongation. Regulates root cell elongation during salt stress. The polypeptide is Protein RICE SALT SENSITIVE 3 (Oryza sativa subsp. japonica (Rice)).